A 252-amino-acid chain; its full sequence is PF03932 family protein CutC (252 aa).

Belongs to the CutC family.

Its subcellular location is the cytoplasm. The protein is PF03932 family protein CutC of Pectobacterium atrosepticum (strain SCRI 1043 / ATCC BAA-672) (Erwinia carotovora subsp. atroseptica).